The primary structure comprises 212 residues: uncharacterized protein (212 aa).

Residues 1-21 (MRRLTAFGLALLLLASGVARG) form the signal peptide.

This sequence to E.coli YfaT and T.maritima TM0986.

This is an uncharacterized protein from Pseudomonas aeruginosa (strain ATCC 15692 / DSM 22644 / CIP 104116 / JCM 14847 / LMG 12228 / 1C / PRS 101 / PAO1).